Consider the following 264-residue polypeptide: 3-methyl-2-oxobutanoate hydroxymethyltransferase (264 aa).

D45 and D84 together coordinate Mg(2+). 3-methyl-2-oxobutanoate contacts are provided by residues D45–S46, D84, and K112. Position 114 (E114) interacts with Mg(2+). The active-site Proton acceptor is the E181.

This sequence belongs to the PanB family. Homodecamer; pentamer of dimers. It depends on Mg(2+) as a cofactor.

The protein resides in the cytoplasm. The catalysed reaction is 3-methyl-2-oxobutanoate + (6R)-5,10-methylene-5,6,7,8-tetrahydrofolate + H2O = 2-dehydropantoate + (6S)-5,6,7,8-tetrahydrofolate. The protein operates within cofactor biosynthesis; (R)-pantothenate biosynthesis; (R)-pantoate from 3-methyl-2-oxobutanoate: step 1/2. In terms of biological role, catalyzes the reversible reaction in which hydroxymethyl group from 5,10-methylenetetrahydrofolate is transferred onto alpha-ketoisovalerate to form ketopantoate. The polypeptide is 3-methyl-2-oxobutanoate hydroxymethyltransferase (Vibrio parahaemolyticus serotype O3:K6 (strain RIMD 2210633)).